Reading from the N-terminus, the 342-residue chain is Dihydroorotase (342 aa).

Residues His-13 and His-15 each contribute to the Zn(2+) site. Substrate contacts are provided by residues 15–17 and Asn-41; that span reads HLR. Lys-98, His-135, and His-173 together coordinate Zn(2+). Lys-98 is subject to N6-carboxylysine. Residue His-135 coordinates substrate. Leu-218 contributes to the substrate binding site. Asp-246 contributes to the Zn(2+) binding site. Asp-246 is a catalytic residue. Substrate contacts are provided by His-250 and Ala-262.

Belongs to the metallo-dependent hydrolases superfamily. DHOase family. Class II DHOase subfamily. Homodimer. Zn(2+) is required as a cofactor.

The enzyme catalyses (S)-dihydroorotate + H2O = N-carbamoyl-L-aspartate + H(+). It participates in pyrimidine metabolism; UMP biosynthesis via de novo pathway; (S)-dihydroorotate from bicarbonate: step 3/3. Functionally, catalyzes the reversible cyclization of carbamoyl aspartate to dihydroorotate. This is Dihydroorotase from Vibrio vulnificus (strain YJ016).